A 306-amino-acid polypeptide reads, in one-letter code: Recombination-associated protein RdgC (306 aa).

This sequence belongs to the RdgC family.

Its subcellular location is the cytoplasm. The protein resides in the nucleoid. In terms of biological role, may be involved in recombination. In Pseudomonas putida (strain ATCC 47054 / DSM 6125 / CFBP 8728 / NCIMB 11950 / KT2440), this protein is Recombination-associated protein RdgC.